Reading from the N-terminus, the 355-residue chain is MSIQTDDFASSSPAARRVVSTAPASPNEEAIERALRPKGLADYVGQAKAREQLEIFIGAARKRSEALDHVLLFGPPGLGKTTLSHIIAAELGVNLRQTSGPVLEKPKDLAAILTNLERNDVLFIDEIHRLSPVVEEILYPALEDYQIDIMIGEGPAARSIKLELQPFTLIGATTRAGMLTNPLRDRFGIVARLEFYSVEELARIVTRSAGLLQVPTDTAGGLEIAKRSRGTPRIANRLLRRVRDYAQVKGDGRIDAAIADKALAMLDVDPQGFDVMDRKLLEAVIHRFDGGPVGLDNVAAAIGEESGTIEDVIEPYLIQQGYLQRTPRGRIATAAAYRHLGVLPPTTSGSELFDA.

The segment at 1 to 26 (MSIQTDDFASSSPAARRVVSTAPASP) is disordered. The segment at 5–196 (TDDFASSSPA…FGIVARLEFY (192 aa)) is large ATPase domain (RuvB-L). Over residues 9 to 22 (ASSSPAARRVVSTA) the composition is skewed to low complexity. ATP contacts are provided by residues Leu-35, Arg-36, Gly-77, Lys-80, Thr-81, Thr-82, 143–145 (EDY), Arg-186, Tyr-196, and Arg-233. Thr-81 is a binding site for Mg(2+). The interval 197–267 (SVEELARIVT…IADKALAMLD (71 aa)) is small ATPAse domain (RuvB-S). The tract at residues 270–355 (PQGFDVMDRK…TTSGSELFDA (86 aa)) is head domain (RuvB-H). Residues Arg-325 and Arg-330 each coordinate DNA.

Belongs to the RuvB family. In terms of assembly, homohexamer. Forms an RuvA(8)-RuvB(12)-Holliday junction (HJ) complex. HJ DNA is sandwiched between 2 RuvA tetramers; dsDNA enters through RuvA and exits via RuvB. An RuvB hexamer assembles on each DNA strand where it exits the tetramer. Each RuvB hexamer is contacted by two RuvA subunits (via domain III) on 2 adjacent RuvB subunits; this complex drives branch migration. In the full resolvosome a probable DNA-RuvA(4)-RuvB(12)-RuvC(2) complex forms which resolves the HJ.

The protein resides in the cytoplasm. It carries out the reaction ATP + H2O = ADP + phosphate + H(+). In terms of biological role, the RuvA-RuvB-RuvC complex processes Holliday junction (HJ) DNA during genetic recombination and DNA repair, while the RuvA-RuvB complex plays an important role in the rescue of blocked DNA replication forks via replication fork reversal (RFR). RuvA specifically binds to HJ cruciform DNA, conferring on it an open structure. The RuvB hexamer acts as an ATP-dependent pump, pulling dsDNA into and through the RuvAB complex. RuvB forms 2 homohexamers on either side of HJ DNA bound by 1 or 2 RuvA tetramers; 4 subunits per hexamer contact DNA at a time. Coordinated motions by a converter formed by DNA-disengaged RuvB subunits stimulates ATP hydrolysis and nucleotide exchange. Immobilization of the converter enables RuvB to convert the ATP-contained energy into a lever motion, pulling 2 nucleotides of DNA out of the RuvA tetramer per ATP hydrolyzed, thus driving DNA branch migration. The RuvB motors rotate together with the DNA substrate, which together with the progressing nucleotide cycle form the mechanistic basis for DNA recombination by continuous HJ branch migration. Branch migration allows RuvC to scan DNA until it finds its consensus sequence, where it cleaves and resolves cruciform DNA. The protein is Holliday junction branch migration complex subunit RuvB of Methylibium petroleiphilum (strain ATCC BAA-1232 / LMG 22953 / PM1).